Reading from the N-terminus, the 122-residue chain is UPF0102 protein BARBAKC583_1042 (122 aa).

The protein belongs to the UPF0102 family.

The chain is UPF0102 protein BARBAKC583_1042 from Bartonella bacilliformis (strain ATCC 35685 / KC583 / Herrer 020/F12,63).